The sequence spans 25 residues: Hemocyanin subunit 3 (25 aa).

It belongs to the tyrosinase family. Hemocyanin subfamily. Hemolymph.

The protein resides in the secreted. The protein localises to the extracellular space. In terms of biological role, hemocyanins are copper-containing oxygen carriers occurring freely dissolved in the hemolymph of many mollusks and arthropods. The chain is Hemocyanin subunit 3 from Maja squinado (Mediterranean spider crab).